The primary structure comprises 161 residues: Beta-lactoglobulin-2 (161 aa).

Disulfide bonds link cysteine 66–cysteine 159 and cysteine 106–cysteine 119.

It belongs to the calycin superfamily. Lipocalin family. Monomer. As to expression, synthesized in mammary gland and secreted in milk.

It localises to the secreted. Its function is as follows. Primary component of whey, it binds retinol and is probably involved in the transport of that molecule. This chain is Beta-lactoglobulin-2 (LGB2), found in Canis lupus familiaris (Dog).